The sequence spans 1066 residues: MKEISESYVPAVVENEVREYWKANNTYRETRKLHESGKPWLFVDGPPYTTGYIHLGTAWNKILKDAILRYHSMTGQHIIERAGYDMHGLPIEVKVEEKLGFKNKADIEKYGVAKFIEECREFALTHKDLMSEQFKDLGTWMDFDDPYQTVDKGYIEAAWYTLKRCEEEKMLERGSRVVNWCPRCGTAIADAEVEYWDETDPSIFVKFPIQGTENEYLVIWTTTPWTLPANVAVAVGEEFVYAKCRAVKDGKSEDLWIAKELAEQILKYGKYQDYSIIETKTGAELAGTKYISPLASAVPMQAQIEHRVVIADYVAMENTGMVHIAPGHGWDDYLVGLKENLPAVCPVDGNGNFTDEAGIFAGKYVKAPETNQEVIDVLGDAMLAVRKITHRYGHCWRCKTPIIYRATSQWFLKVKDIREKMLEEIADEVTWYPEWAGSARFHDWVEEARDWCISRQRYWGIPIPVWVCPVCNKYHVVGRYEELEQLSGQKMTDPHRPYVDDITIPCECGGTMKRIPDIFDVWYDSGIASWATLRFPEKPEDFGKYWPADFILEGHDQTRGWFYSQLALSTIAFGKAPYKSVLMHGFALDAEGKKMSKSLGNVIAPEDVAKQFGVDVMRQYILSANAPWDDMRFSLEGVKTNHRMFNVLWNVYKFPLPYMALDGYKPAAKDGVWDPSAVEDHISEFCREDRWLISRVNSLAEQVTKEMEVCNLHRATRPISTFILDELSRWYVQLVRPRMWLEEESVSKMQAYDTMYYVMRRLVTIFAPFAPHITECMYQNLRCEGDLPSVHMVDWFSGNDALRDPVLEEEMEIVQEFDEAVANARQNGKRKGRWPVGTVVVATDSEKVAGAVSAMNDMCCDRANARTVTVVKGVWDKLDWTAVPVMKVIGKQFGRDGPKVKAFIEEANGTKLKALLTADGKVSMEKDGFTAELTEEHMTFEEKMPENIFSSPMENGTIYVDVTLTPELEAEGYSREVIRRIQEMRKQAGLAVDAKIKAEVVIDDARVMPLVDSKHDVIETEVRANCLKIRVPDGETCSCRVADEAILAMDWEIDDLKVRISISKAE.

The short motif at 47–57 (PYTTGYIHLGT) is the 'HIGH' region element. A 'KMSKS' region motif is present at residues 594–598 (KMSKS). An ATP-binding site is contributed by lysine 597.

Belongs to the class-I aminoacyl-tRNA synthetase family. IleS type 2 subfamily. As to quaternary structure, monomer. Requires Zn(2+) as cofactor.

It is found in the cytoplasm. The catalysed reaction is tRNA(Ile) + L-isoleucine + ATP = L-isoleucyl-tRNA(Ile) + AMP + diphosphate. Functionally, catalyzes the attachment of isoleucine to tRNA(Ile). As IleRS can inadvertently accommodate and process structurally similar amino acids such as valine, to avoid such errors it has two additional distinct tRNA(Ile)-dependent editing activities. One activity is designated as 'pretransfer' editing and involves the hydrolysis of activated Val-AMP. The other activity is designated 'posttransfer' editing and involves deacylation of mischarged Val-tRNA(Ile). This is Isoleucine--tRNA ligase from Methanocorpusculum labreanum (strain ATCC 43576 / DSM 4855 / Z).